The chain runs to 716 residues: Calpain clp-4 (716 aa).

The disordered stretch occupies residues 31-53; sequence DDDDKQEAPVAVSKAPKGKGSNH. The Calpain catalytic domain maps to 240–536; it reads LFEDPEFPAT…FTQMEVCNLT (297 aa). Residues Cys-295, His-452, and Asn-476 contribute to the active site.

It belongs to the peptidase C2 family.

Functionally, calcium-regulated non-lysosomal thiol-protease which catalyzes limited proteolysis of substrates. Promotes starvation-induced muscle atrophy. This is Calpain clp-4 from Caenorhabditis elegans.